Reading from the N-terminus, the 786-residue chain is DNA repair and recombination protein RAD54-like (786 aa).

Residues 2-9 (RRSLAPSQ) form a required for chromatin remodeling, strand pairing activities and coupling of ATPase activity region. At Thr22 the chain carries Phosphothreonine. In terms of domain architecture, Helicase ATP-binding spans 165-340 (EGKRGNFNGC…FSLVNFVNPE (176 aa)). 178–185 (DEMGLGKT) lines the ATP pocket. Residues 291–294 (DEGH) carry the DEGH box motif. The 158-residue stretch at 497 to 654 (LLDFMLAAIR…NNDSAEKHFT (158 aa)) folds into the Helicase C-terminal domain. Residues 740-786 (KQPTCITEDNHSEQPQLNSKRNANSVLENDDDEDFDPNSSDEKFLGF) are disordered. Over residues 752 to 766 (EQPQLNSKRNANSVL) the composition is skewed to polar residues.

This sequence belongs to the SNF2/RAD54 helicase family. As to quaternary structure, interacts (via N-terminus) with spn-A/Rad51.

It is found in the nucleus. Its function is as follows. Involved in mitotic DNA repair and meiotic recombination. Functions in the recombinational DNA repair pathway. Essential for interhomolog gene conversion (GC), but may have a less important role in intersister GC than spn-A/Rad51. In the presence of DNA, spn-A/Rad51 enhances the ATPase activity of okr/Rad54. The protein is DNA repair and recombination protein RAD54-like of Drosophila virilis (Fruit fly).